The sequence spans 265 residues: Glutamate racemase 2 (265 aa).

Residues 7–8 (DS) and 39–40 (YG) contribute to the substrate site. The active-site Proton donor/acceptor is the Cys70. Position 71 to 72 (71 to 72 (NT)) interacts with substrate. Cys182 functions as the Proton donor/acceptor in the catalytic mechanism. 183–184 (TH) is a binding site for substrate.

The protein belongs to the aspartate/glutamate racemases family.

The enzyme catalyses L-glutamate = D-glutamate. It functions in the pathway cell wall biogenesis; peptidoglycan biosynthesis. Provides the (R)-glutamate required for cell wall biosynthesis. This Bacillus subtilis (strain 168) protein is Glutamate racemase 2 (yrpC).